Consider the following 191-residue polypeptide: Small ribosomal subunit protein uS5 (191 aa).

The S5 DRBM domain occupies 20–83 (FADRLVAINR…EQAKRQMIRV (64 aa)). Residues 158-191 (TSPRMVAQRRGKKVSDILKKDGEPAEAAAEPAEA) are disordered. Positions 170 to 180 (KVSDILKKDGE) are enriched in basic and acidic residues. Over residues 182–191 (AEAAAEPAEA) the composition is skewed to low complexity.

This sequence belongs to the universal ribosomal protein uS5 family. Part of the 30S ribosomal subunit. Contacts proteins S4 and S8.

Its function is as follows. With S4 and S12 plays an important role in translational accuracy. Functionally, located at the back of the 30S subunit body where it stabilizes the conformation of the head with respect to the body. This Dinoroseobacter shibae (strain DSM 16493 / NCIMB 14021 / DFL 12) protein is Small ribosomal subunit protein uS5.